The following is a 424-amino-acid chain: Riboflavin biosynthesis protein RibBA (424 aa).

Residues Met-1–Lys-204 form a DHBP synthase region. D-ribulose 5-phosphate-binding positions include Arg-28–Glu-29, Asp-33, Arg-141–Thr-145, and Glu-165. Glu-29 is a Mg(2+) binding site. His-144 contributes to the Mg(2+) binding site. The GTP cyclohydrolase II stretch occupies residues His-205 to Leu-424. GTP is bound at residue Arg-259–Glu-263. The Zn(2+) site is built by Cys-264, Cys-275, and Cys-277. GTP is bound by residues Gln-280, Glu-303–Arg-305, and Thr-325. The active-site Proton acceptor; for GTP cyclohydrolase activity is Asp-337. The active-site Nucleophile; for GTP cyclohydrolase activity is Arg-339. The GTP site is built by Thr-360 and Lys-365.

It in the N-terminal section; belongs to the DHBP synthase family. The protein in the C-terminal section; belongs to the GTP cyclohydrolase II family. It depends on Mg(2+) as a cofactor. Requires Mn(2+) as cofactor. Zn(2+) serves as cofactor.

The catalysed reaction is D-ribulose 5-phosphate = (2S)-2-hydroxy-3-oxobutyl phosphate + formate + H(+). The enzyme catalyses GTP + 4 H2O = 2,5-diamino-6-hydroxy-4-(5-phosphoribosylamino)-pyrimidine + formate + 2 phosphate + 3 H(+). It participates in cofactor biosynthesis; riboflavin biosynthesis; 2-hydroxy-3-oxobutyl phosphate from D-ribulose 5-phosphate: step 1/1. The protein operates within cofactor biosynthesis; riboflavin biosynthesis; 5-amino-6-(D-ribitylamino)uracil from GTP: step 1/4. In terms of biological role, catalyzes the conversion of D-ribulose 5-phosphate to formate and 3,4-dihydroxy-2-butanone 4-phosphate. Catalyzes the conversion of GTP to 2,5-diamino-6-ribosylamino-4(3H)-pyrimidinone 5'-phosphate (DARP), formate and pyrophosphate. This chain is Riboflavin biosynthesis protein RibBA, found in Rhodococcus erythropolis (strain PR4 / NBRC 100887).